Here is a 72-residue protein sequence, read N- to C-terminus: Translation initiation factor IF-1 (72 aa).

The S1-like domain occupies 1 to 72 (MSKSDYIELE…TKGRITFRHK (72 aa)).

This sequence belongs to the IF-1 family. In terms of assembly, component of the 30S ribosomal translation pre-initiation complex which assembles on the 30S ribosome in the order IF-2 and IF-3, IF-1 and N-formylmethionyl-tRNA(fMet); mRNA recruitment can occur at any time during PIC assembly.

Its subcellular location is the cytoplasm. Its function is as follows. One of the essential components for the initiation of protein synthesis. Stabilizes the binding of IF-2 and IF-3 on the 30S subunit to which N-formylmethionyl-tRNA(fMet) subsequently binds. Helps modulate mRNA selection, yielding the 30S pre-initiation complex (PIC). Upon addition of the 50S ribosomal subunit IF-1, IF-2 and IF-3 are released leaving the mature 70S translation initiation complex. The chain is Translation initiation factor IF-1 from Vesicomyosocius okutanii subsp. Calyptogena okutanii (strain HA).